A 526-amino-acid polypeptide reads, in one-letter code: MFS-type transporter clz19 (526 aa).

The tract at residues 1–49 (MNVDTTSPQAPLAGVESKQDGASNEATAKAESTTHDQNESSSFDERPVH) is disordered. Basic and acidic residues predominate over residues 32 to 49 (STTHDQNESSSFDERPVH). N-linked (GlcNAc...) asparagine glycosylation is present at Asn-38. A helical transmembrane segment spans residues 59 to 79 (ALLAVASFAAAISPASTTTYY). Residue Asn-97 is glycosylated (N-linked (GlcNAc...) asparagine). The next 3 helical transmembrane spans lie at 126 to 143 (VYLV…GLAL), 186 to 206 (AYLT…GGLL), and 214 to 234 (AIFW…LTFF). 2 N-linked (GlcNAc...) asparagine glycosylation sites follow: Asn-238 and Asn-253. Helical transmembrane passes span 294-314 (FIVC…ISIF), 322-342 (YGYS…GSIL), 384-404 (LTVS…YGWL), 411-431 (VASV…VLIA), 446-466 (ALGA…VAAV), and 473-493 (IGIG…LPAL).

It belongs to the major facilitator superfamily.

It localises to the membrane. Functionally, MFS-type transporter; part of the gene cluster that mediates the biosynthesis of squalestatin S1 (SQS1, also known as zaragozic acid A), a heavily oxidized fungal polyketide that offers potent cholesterol lowering activity by targeting squalene synthase (SS). The sequence is that of MFS-type transporter clz19 from Cochliobolus lunatus (Filamentous fungus).